The chain runs to 756 residues: Xylosyl- and glucuronyltransferase LARGE1 (756 aa).

The Cytoplasmic portion of the chain corresponds to 1 to 10; that stretch reads MLGICRGRRK. A helical; Signal-anchor for type II membrane protein membrane pass occupies residues 11 to 31; sequence FLAASLSLLCIPAITWIYLFS. Topologically, residues 32-756 are lumenal; the sequence is GSFEDGKPVS…LKYLTAENNS (725 aa). Disordered regions lie at residues 43–69 and 81–109; these read SPLE…EVRM and RQLS…EGTG. Residues 44–58 are compositionally biased toward polar residues; the sequence is PLESQAHSPRYTASS. Positions 53-95 form a coiled coil; it reads RYTASSQRERESLEVRMREVEEENRALRRQLSLAQGRAPSHRR. Residues 59 to 69 are compositionally biased toward basic and acidic residues; sequence QRERESLEVRM. Asparagine 97, asparagine 122, and asparagine 148 each carry an N-linked (GlcNAc...) asparagine glycan. Residues 138–413 form a xylosyltransferase activity region; it reads IHVAIVCAGY…FLEYDGNLLR (276 aa). Residues aspartate 242 and aspartate 244 each contribute to the Mn(2+) site. N-linked (GlcNAc...) asparagine glycosylation occurs at asparagine 272. Residues 414 to 756 form a glucuronyltransferase activity region; the sequence is RELFGCPSEA…LKYLTAENNS (343 aa). Residues aspartate 563 and aspartate 565 each coordinate Mn(2+).

It in the C-terminal section; belongs to the glycosyltransferase 49 family. The protein in the N-terminal section; belongs to the glycosyltransferase 8 family. As to quaternary structure, interacts with DAG1 (via the N-terminal domain of alpha-DAG1); the interaction increases binding of DAG1 to laminin. Interacts with B4GAT1. It depends on Mn(2+) as a cofactor. In terms of tissue distribution, ubiquitous. Highest expression in heart, brain and skeletal muscle.

It is found in the golgi apparatus membrane. The enzyme catalyses 3-O-[beta-D-GlcA-(1-&gt;3)-beta-D-Xyl-(1-&gt;4)-Rib-ol-P-Rib-ol-P-3-beta-D-GalNAc-(1-&gt;3)-beta-D-GlcNAc-(1-&gt;4)-(O-6-P-alpha-D-Man)]-Thr-[protein] + UDP-alpha-D-xylose = 3-O-[alpha-D-Xyl-(1-&gt;3)-beta-D-GlcA-(1-&gt;4)-beta-D-Xyl-(1-&gt;4)-Rib-ol-P-Rib-ol-P-3-beta-D-GalNAc-(1-&gt;3)-beta-D-GlcNAc-(1-&gt;4)-(O-6-P-alpha-D-Man)]-Thr-[protein] + UDP + H(+). It catalyses the reaction 3-O-{(1-&gt;[3)-alpha-D-Xyl-(1-&gt;3)-beta-D-GlcA-(1-&gt;](n)-4)-beta-D-Xyl-(1-&gt;4)-Rib-ol-P-Rib-ol-P-3-beta-D-GalNAc-(1-&gt;3)-beta-D-GlcNAc-(1-&gt;4)-O-6-P-alpha-D-Man}-L-Thr-[protein] + UDP-alpha-D-glucuronate = 3-O-{beta-D-GlcA-(1-&gt;[3)-alpha-D-Xyl-(1-&gt;3)-beta-D-GlcA-(1-&gt;](n)-4)-beta-D-Xyl-(1-&gt;4)-Rib-ol-P-Rib-ol-P-3-beta-D-GalNAc-(1-&gt;3)-beta-D-GlcNAc-(1-&gt;4)-O-6-P-alpha-D-Man}-L-Thr-[protein] + UDP + H(+). It carries out the reaction 3-O-{beta-D-GlcA-(1-&gt;[3)-alpha-D-Xyl-(1-&gt;3)-beta-D-GlcA-(1-&gt;](n)-4)-beta-D-Xyl-(1-&gt;4)-Rib-ol-P-Rib-ol-P-3-beta-D-GalNAc-(1-&gt;3)-beta-D-GlcNAc-(1-&gt;4)-O-6-P-alpha-D-Man}-L-Thr-[protein] + UDP-alpha-D-xylose = 3-O-{(1-&gt;[3)-alpha-D-Xyl-(1-&gt;3)-beta-D-GlcA-(1-&gt;](n+1)-4)-beta-D-Xyl-(1-&gt;4)-Rib-ol-P-Rib-ol-P-3-beta-D-GalNAc-(1-&gt;3)-beta-D-GlcNAc-(1-&gt;4)-O-6-P-alpha-D-Man}-L-Thr-[protein] + UDP + H(+). Its pathway is protein modification; protein glycosylation. In terms of biological role, bifunctional glycosyltransferase with both alpha-1,3-xylosyltransferase and beta-1,3-glucuronyltransferase activities involved in the maturation of alpha-dystroglycan (DAG1) by glycosylation leading to DAG1 binding to laminin G-like domain-containing extracellular proteins with high affinity. Elongates the glucuronyl-beta-1,4-xylose-beta disaccharide primer structure initiated by B4GAT1 by adding repeating units [-3-Xylose-alpha-1,3-GlcA-beta-1-] to produce a heteropolysaccharide. Requires the phosphorylation of core M3 (O-mannosyl trisaccharide) by POMK to elongate the glucuronyl-beta-1,4-xylose-beta disaccharide primer. Plays a key role in skeletal muscle function and regeneration. The sequence is that of Xylosyl- and glucuronyltransferase LARGE1 from Homo sapiens (Human).